Reading from the N-terminus, the 291-residue chain is ADP-dependent (S)-NAD(P)H-hydrate dehydratase (291 aa).

One can recognise a YjeF C-terminal domain in the interval 5 to 273 (SKDILEEVIT…QALPTYMKKY (269 aa)). Residues A40, G103, and H153 each coordinate (6S)-NADPHX. Residue G215 participates in AMP binding. Residue D216 coordinates (6S)-NADPHX.

The protein belongs to the NnrD/CARKD family. Homotetramer. Requires Mg(2+) as cofactor.

It carries out the reaction (6S)-NADHX + ADP = AMP + phosphate + NADH + H(+). The enzyme catalyses (6S)-NADPHX + ADP = AMP + phosphate + NADPH + H(+). Catalyzes the dehydration of the S-form of NAD(P)HX at the expense of ADP, which is converted to AMP. Together with NAD(P)HX epimerase, which catalyzes the epimerization of the S- and R-forms, the enzyme allows the repair of both epimers of NAD(P)HX, a damaged form of NAD(P)H that is a result of enzymatic or heat-dependent hydration. This Enterococcus faecalis (strain ATCC 700802 / V583) protein is ADP-dependent (S)-NAD(P)H-hydrate dehydratase.